An 87-amino-acid chain; its full sequence is Candoxin (87 aa).

The signal sequence occupies residues 1-21 (MKTLLLTLVVVTIVCLDLGYT). 5 disulfide bridges follow: Cys-24–Cys-47, Cys-27–Cys-32, Cys-40–Cys-64, Cys-68–Cys-80, and Cys-81–Cys-86.

Expressed by the venom gland.

It localises to the secreted. Functionally, binds and inhibits muscular and neuronal nicotinic acetylcholine receptors (nAChR). Is a reversible antagonist of muscle nAChR (alpha-1-beta-1-delta-epsilon/CHRNA1-CHRNB1-CHRND-CHRNE) (IC(50)=10 nM) and a potent and poorly reversible antagonist of the neuronal alpha-7/CHRNA7 nAChR (IC(50)=50 nM). May exhibit differential affinities for the two binding sites on the muscle nAChR. This chain is Candoxin, found in Bungarus candidus (Malayan krait).